A 142-amino-acid chain; its full sequence is Hemoglobin subunit zeta (142 aa).

N-acetylserine is present on Ser2. Positions 2 to 142 (SLTRTERTII…VSGVLTEKYR (141 aa)) constitute a Globin domain. The residue at position 29 (Thr29) is a Phosphothreonine. Ser53 carries the post-translational modification Phosphoserine. His59 is a binding site for heme b. Ser73 and Ser82 each carry phosphoserine. Residue His88 participates in heme b binding.

It belongs to the globin family. In terms of assembly, heterotetramer of two zeta chains and beta-type chains.

In terms of biological role, the zeta chain is an alpha-type chain of mammalian embryonic hemoglobin. The sequence is that of Hemoglobin subunit zeta (HBZ1) from Capra hircus (Goat).